The following is a 395-amino-acid chain: MQLSIQAIIGFVVAAGLAVASELPSPMTVNLERRKMLVTKNDTVDFKAVRKQANALNYKYDKLLRNFRKNTGRDHPLLHLLLDLIDKRDGKGDVDLDDIGEGQLWAGDVQFGQSKFKIDFDTGSADTLVNPFVYFPHRSKSSRKTHHTFSTAYGDGTTASGFIYTDDLKIGGYKAKDVAIGLSVTKFINDEDNQGIAGMSFPAVQSFPKKFDPFFVALVKQKVVPEPVFQFTLKRGSGSTLHLGGIDNSRFQGELSYVDVNPEDGFWISEGKVNGKKIDACIDTGSSIIFGPIDEVREVITKMDGVTPFTAGGALHGAFDCSKPPKLDFEFAGQKFNLGENQVSFGKYQGQCVLSIMGQKNLPMNAWVVGDSFLQTASVVFDMGKNRMGFAPSSN.

Positions M1–A20 are cleaved as a signal peptide. A propeptide spans S21–R88 (removed in mature form). N41 carries an N-linked (GlcNAc...) asparagine glycan. The region spanning W105 to A391 is the Peptidase A1 domain. Catalysis depends on residues D121 and D283. An intrachain disulfide couples C321 to C352.

It belongs to the peptidase A1 family.

It is found in the secreted. With respect to regulation, inhibited by pepstatin A. Dominant secreted aspartyl protease that has a clear preference for aromatic residues in the P1' position directly adjacent to the cleavage site and, in particular, Trp. In addition, it generally cleaves peptides containing Lys, Arg, Phe, Tyr, or Nle (norleucine) in the P1 position, Nle and Glu at P2, and Arg and Val at P2'. Has important roles in facilitating the interaction of the yeast with the external environment. Is able to rapidly hydrolyze Staphylococcus aureus protein A, an important S.aureus virulence factor involved in immune evasion and biofilm formation. Shows anti-biofilm properties and thus plays a role in inter-kingdom interactions, beneficial for host skin health. In Malassezia globosa (strain ATCC MYA-4612 / CBS 7966) (Dandruff-associated fungus), this protein is Secreted aspartyl protease 1.